Reading from the N-terminus, the 823-residue chain is Lon protease (823 aa).

One can recognise a Lon N-terminal domain in the interval 22–217 (LPLLPVRDVV…KVNEHLNKEH (196 aa)). 369 to 376 (GPPGVGKT) contacts ATP. The region spanning 605-786 (KNEVGIVTGL…DDVLAVALET (182 aa)) is the Lon proteolytic domain. Catalysis depends on residues Ser-692 and Lys-735. The interval 788–823 (PPPPPASEGKPAATVKAPPRRGIAAPRKGAMAGAKS) is disordered.

Belongs to the peptidase S16 family. In terms of assembly, homohexamer. Organized in a ring with a central cavity.

The protein resides in the cytoplasm. The catalysed reaction is Hydrolysis of proteins in presence of ATP.. ATP-dependent serine protease that mediates the selective degradation of mutant and abnormal proteins as well as certain short-lived regulatory proteins. Required for cellular homeostasis and for survival from DNA damage and developmental changes induced by stress. Degrades polypeptides processively to yield small peptide fragments that are 5 to 10 amino acids long. Binds to DNA in a double-stranded, site-specific manner. This Geobacter metallireducens (strain ATCC 53774 / DSM 7210 / GS-15) protein is Lon protease.